We begin with the raw amino-acid sequence, 573 residues long: MLTNLEIARGAKLLPIEEVGRSMGLREERHLEPYGRHVAKVDLCAIEDLSERPKAKYILVSAITPTPLGEGKTTTTVGLGQAFSHIGKRATIAIRQASMGPAFGIKGGAAGGGYSQVVPMERLNLHLTGDLHAVTEAHNMLAAMIDNHLYHGNGLGIEPHSISWRRVMDVNDRSLRNIVIGLGARTDGVPRQSGFDITAASEVMAILALASSLEDLRERLGRIVIGHNREGNPVSAEDVRGAGAMAVILKEAIKPNLMQTLEGTPALVHAGPFGNIATGNSSVVADLIGIRTADYLITEAGFGADMGAERFFNIKCRISGLEPDAAVVVATVRALKAHSGRYQIKAGAPLPEELLEENPQDVLAGAENLKKQIENIKLHGVPAVVAINAFPTDHPSEHKAIEEAAKEVGARCAVCRHFTEGGKGAVELARALEETIEENERERRRGGGGSFRFLYPLEMPLKQKIETIAREVYGAEGVEYDAEALRALEGFERAGFGRLPVCLAKTHLSLSSDPALKGAPRGWKLSVREVRASVGAGFIYPICGQMRTMPGLSAHPAAERIDLDGEGNVVGLF.

66 to 73 is a binding site for ATP; sequence TPLGEGKT.

The protein belongs to the formate--tetrahydrofolate ligase family.

The catalysed reaction is (6S)-5,6,7,8-tetrahydrofolate + formate + ATP = (6R)-10-formyltetrahydrofolate + ADP + phosphate. It participates in one-carbon metabolism; tetrahydrofolate interconversion. This Rubrobacter xylanophilus (strain DSM 9941 / JCM 11954 / NBRC 16129 / PRD-1) protein is Formate--tetrahydrofolate ligase 3.